The chain runs to 532 residues: Cytochrome c oxidase subunit 1 (532 aa).

3 consecutive transmembrane segments (helical) span residues 1–21 (MWDY…AYAA), 27–47 (LPYM…LIWV), and 69–89 (GVIA…VIAF). Histidine 114 lines the heme b pocket. The next 8 helical transmembrane spans lie at 115 to 135 (TSAV…FYVV), 143 to 163 (LFGG…IIVT), 185 to 205 (LDIL…GTIF), 212 to 232 (IYVA…LHIV), 263 to 283 (GHNA…YYFV), 296 to 316 (LSIV…PHHL), 328 to 348 (LGMV…INGL), and 366 to 386 (MMVV…MMSI). The Cu cation site is built by histidine 264, histidine 314, and histidine 315. Positions 402 and 404 each coordinate heme b. The next 3 membrane-spanning stretches (helical) occupy residues 403–423 (VHSG…YFLT), 442–462 (FWLA…TGIM), and 496–516 (VGGV…WATV).

The protein belongs to the heme-copper respiratory oxidase family. Cu(2+) serves as cofactor. Requires heme b as cofactor.

The protein resides in the cell membrane. The enzyme catalyses 4 Fe(II)-[cytochrome c] + O2 + 8 H(+)(in) = 4 Fe(III)-[cytochrome c] + 2 H2O + 4 H(+)(out). It functions in the pathway energy metabolism; oxidative phosphorylation. Functionally, cytochrome c oxidase is the component of the respiratory chain that catalyzes the reduction of oxygen to water. Subunits 1-3 form the functional core of the enzyme complex. Co I is the catalytic subunit of the enzyme. Electrons originating in cytochrome c are transferred via the copper A center of subunit 2 and heme a of subunit 1 to the bimetallic center formed by heme a3 and copper B. This cytochrome c oxidase shows proton pump activity across the membrane in addition to the electron transfer. In Rhodobacter capsulatus (Rhodopseudomonas capsulata), this protein is Cytochrome c oxidase subunit 1 (ctaD).